Reading from the N-terminus, the 444-residue chain is Tol-Pal system protein TolB (444 aa).

Residues 1 to 19 (MRNIIYFILSLLFSVTSYA) form the signal peptide.

The protein belongs to the TolB family. As to quaternary structure, the Tol-Pal system is composed of five core proteins: the inner membrane proteins TolA, TolQ and TolR, the periplasmic protein TolB and the outer membrane protein Pal. They form a network linking the inner and outer membranes and the peptidoglycan layer.

It is found in the periplasm. Functionally, part of the Tol-Pal system, which plays a role in outer membrane invagination during cell division and is important for maintaining outer membrane integrity. This is Tol-Pal system protein TolB from Rickettsia conorii (strain ATCC VR-613 / Malish 7).